Consider the following 512-residue polypeptide: Histidine ammonia-lyase (512 aa).

Positions 141 to 143 form a cross-link, 5-imidazolinone (Ala-Gly); that stretch reads ASG. Ser-142 bears the 2,3-didehydroalanine (Ser) mark.

Belongs to the PAL/histidase family. Contains an active site 4-methylidene-imidazol-5-one (MIO), which is formed autocatalytically by cyclization and dehydration of residues Ala-Ser-Gly.

Its subcellular location is the cytoplasm. The enzyme catalyses L-histidine = trans-urocanate + NH4(+). The protein operates within amino-acid degradation; L-histidine degradation into L-glutamate; N-formimidoyl-L-glutamate from L-histidine: step 1/3. The chain is Histidine ammonia-lyase from Bacillus velezensis (strain DSM 23117 / BGSC 10A6 / LMG 26770 / FZB42) (Bacillus amyloliquefaciens subsp. plantarum).